The primary structure comprises 427 residues: MEMLKAEVKPAVGCTEPVALALACAKAKELLGEEIVENRMLVSPSIYKNGMCVGIPGTERLGLKIAAALGIVGGHSENGLSVLETLTKEEVKIAEDYMDNTPLSITPADTREKVFIEVVLKGKNHIAKVRIRTKHDNFTFLEKDGEVLLDNEPKVSASNDAAEKAESLMDTVTIQELIKNVEEIDFKDIEFLLDGVKMNEEMAEYGLKQKTGIGVGYGIKKSIEEGLLGNDVINYAMMLTAGASDARMAGVKMPVMSSNGSGNHGLTAILPIVAYNKKFPQSDERLAKALAISHLVTGYIKNYTGRLSAVCGCGVAASTGATAGISWLMNGTEKQIEGAIENMIADLSGMICDGAKAGCALKLSSAASAAIQSAIIAKQDCFVPPLNGIVGSSVEQSIQNLGRVSDKGMSITDEIILNVMNDMNKVD.

This sequence belongs to the UPF0597 family.

The polypeptide is UPF0597 protein CD630_32320 (Clostridioides difficile (strain 630) (Peptoclostridium difficile)).